Reading from the N-terminus, the 397-residue chain is MTKYFFSSSFLLFLGNWIGQIGLNWFVLTTYHNAVYLGIVNFCRLVPILLLSVWAGAIADKYDKGRLLRITISSSFLVTAILCVLTYSFTAIPISVIIIYATLRGILSAVETPLRQAILPDLSDKISTTQAVSFHSFIINICRSIGPAIAGVILAVYHAPTTFLAQAICYFIAVLLCLPLHFKVTKIPEDASRYMPLKVIIDYFKLHMEGRQIFITSLLIMATGFSYTTLLPVLTNKVFPGKSEIFGIAMTMCAIGGIIATLVLPKVLKYIGMVNMYYLSSFLFGIALLGVVFHNIVIMFICITLIGLFSQWARTTNRVYFQNNVKDYERGKVLSIIMMDRGMIPLGSLLMSICADVFGIVRTFSIMGISTICITMVFYFINRKLKLKLEESNHGIS.

The next 12 helical transmembrane spans lie at 10-30, 39-59, 67-87, 93-110, 137-157, 162-182, 213-233, 245-265, 271-292, 296-313, 333-353, and 358-378; these read FLLF…VLTT, IVNF…GAIA, LLRI…VLTY, PISV…LSAV, FIIN…LAVY, TFLA…PLHF, IFIT…LLPV, IFGI…LVLP, IGMV…LGVV, IVIM…SQWA, VLSI…LMSI, and FGIV…TMVF.

It belongs to the major facilitator superfamily.

It is found in the cell membrane. Functionally, involved in staphyloferrin A secretion. The polypeptide is Staphyloferrin A transporter (Staphylococcus aureus (strain NCTC 8325 / PS 47)).